A 476-amino-acid chain; its full sequence is Bifunctional protein HldE (476 aa).

Residues 1–319 (MKLTLPDYDQ…EAIYGSQDSG (319 aa)) are ribokinase. 195–198 (NLSE) is a binding site for ATP. The active site involves aspartate 264. The cytidylyltransferase stretch occupies residues 344–476 (MTNGCFDILH…IIEAIRGGKG (133 aa)).

In the N-terminal section; belongs to the carbohydrate kinase PfkB family. It in the C-terminal section; belongs to the cytidylyltransferase family. Homodimer.

It catalyses the reaction D-glycero-beta-D-manno-heptose 7-phosphate + ATP = D-glycero-beta-D-manno-heptose 1,7-bisphosphate + ADP + H(+). It carries out the reaction D-glycero-beta-D-manno-heptose 1-phosphate + ATP + H(+) = ADP-D-glycero-beta-D-manno-heptose + diphosphate. The protein operates within nucleotide-sugar biosynthesis; ADP-L-glycero-beta-D-manno-heptose biosynthesis; ADP-L-glycero-beta-D-manno-heptose from D-glycero-beta-D-manno-heptose 7-phosphate: step 1/4. It participates in nucleotide-sugar biosynthesis; ADP-L-glycero-beta-D-manno-heptose biosynthesis; ADP-L-glycero-beta-D-manno-heptose from D-glycero-beta-D-manno-heptose 7-phosphate: step 3/4. Its function is as follows. Catalyzes the phosphorylation of D-glycero-D-manno-heptose 7-phosphate at the C-1 position to selectively form D-glycero-beta-D-manno-heptose-1,7-bisphosphate. In terms of biological role, catalyzes the ADP transfer from ATP to D-glycero-beta-D-manno-heptose 1-phosphate, yielding ADP-D-glycero-beta-D-manno-heptose. The sequence is that of Bifunctional protein HldE from Photobacterium profundum (strain SS9).